A 397-amino-acid polypeptide reads, in one-letter code: MLNNKRLFTSESVTEGHPDKIADQVSDAILDAILKDDPNARVACETTVTTGMALIAGEISTTTYVDIPKVVRETIKEIGYTRAKYGYDYETMAILTAIDEQSPDIAQGVDKALEYRDKDSEEEIEATGAGDQGLMFGYATNETETYMPLAIYLSHQLAKRLSDVRKDGTLNYLRPDGKVQVTVEYDENDNPVRIDTIVVSTQHADDVTLEQIQEDIKAHVIYPTVPENLINEQTKFYINPTGRFVIGGPQGDAGLTGRKIIVDTYGGYARHGGGCFSGKDPTKVDRSAAYAARYVAKNIVAAGLADQCEVQLAYAIGVAEPVSIAIDTFGTGKVSEGQLVEAVRKHFDLRPAGIIKMLDLKQPIYKQTAAYGHFGRTDVLFPWEKLDKVEELKDAVK.

Residue histidine 17 coordinates ATP. Aspartate 19 contacts Mg(2+). Glutamate 45 contributes to the K(+) binding site. The L-methionine site is built by glutamate 58 and glutamine 101. Residues 101-111 (QSPDIAQGVDK) form a flexible loop region. Residues 176–178 (DGK), 243–244 (RF), aspartate 252, 258–259 (RK), and lysine 279 each bind ATP. Residue aspartate 252 coordinates L-methionine. Lysine 283 contacts L-methionine.

It belongs to the AdoMet synthase family. In terms of assembly, homotetramer; dimer of dimers. The cofactor is Mg(2+). K(+) is required as a cofactor.

It localises to the cytoplasm. It catalyses the reaction L-methionine + ATP + H2O = S-adenosyl-L-methionine + phosphate + diphosphate. The protein operates within amino-acid biosynthesis; S-adenosyl-L-methionine biosynthesis; S-adenosyl-L-methionine from L-methionine: step 1/1. Catalyzes the formation of S-adenosylmethionine (AdoMet) from methionine and ATP. The overall synthetic reaction is composed of two sequential steps, AdoMet formation and the subsequent tripolyphosphate hydrolysis which occurs prior to release of AdoMet from the enzyme. The protein is S-adenosylmethionine synthase of Staphylococcus aureus (strain MRSA252).